Here is a 418-residue protein sequence, read N- to C-terminus: Trans-acting enoyl reductase (418 aa).

Belongs to the saccharopine dehydrogenase family. Enoyl reductase subfamily.

Functionally, involved in the reduction of the double bond between C-4 and C-5 during phthiocerol dimycocerosates (DIM A) and glycosylated phenolphthiocerol dimycocerosates (PGL) biosynthesis. The chain is Trans-acting enoyl reductase from Mycobacterium leprae (strain TN).